The following is a 363-amino-acid chain: rRNA processing protein rcl1 (363 aa).

This sequence belongs to the RNA 3'-terminal cyclase family. Type 2 subfamily. Interacts directly with bms1 and the U3 snoRNA to form a stable subcomplex. Component of the 90S small subunit processome also known as 90S pre-ribosome that consists of the 35S pre-rRNA, early-associating ribosomal proteins most of which are part of the small ribosomal subunit, the U3 snoRNA and associated proteins.

It is found in the nucleus. The protein resides in the nucleolus. Does not have cyclase activity. Plays a role in 40S-ribosomal-subunit biogenesis in the early pre-rRNA processing steps at sites A0, A1 and A2 that are required for proper maturation of the 18S RNA. Rcl1 activates bms1 by promoting GDP/GTP exchange. The chain is rRNA processing protein rcl1 (rcl1) from Schizosaccharomyces pombe (strain 972 / ATCC 24843) (Fission yeast).